A 420-amino-acid chain; its full sequence is Na(+)/H(+) antiporter NhaA (420 aa).

The next 11 helical transmembrane spans lie at Val-4–Ile-24, Asp-70–Leu-90, Leu-104–Phe-124, Ala-132–Gly-152, Phe-165–Tyr-185, Pro-192–Leu-212, Leu-233–Met-250, Val-299–Gly-319, Trp-323–Leu-343, Leu-361–Val-381, and Gly-395–Val-415.

The protein belongs to the NhaA Na(+)/H(+) (TC 2.A.33) antiporter family.

The protein resides in the cell inner membrane. The enzyme catalyses Na(+)(in) + 2 H(+)(out) = Na(+)(out) + 2 H(+)(in). Na(+)/H(+) antiporter that extrudes sodium in exchange for external protons. This chain is Na(+)/H(+) antiporter NhaA, found in Jannaschia sp. (strain CCS1).